Reading from the N-terminus, the 147-residue chain is Large ribosomal subunit protein uL15 (147 aa).

A disordered region spans residues Met-1–Met-55. Positions Val-23–Met-35 are enriched in gly residues.

Belongs to the universal ribosomal protein uL15 family. As to quaternary structure, part of the 50S ribosomal subunit.

In terms of biological role, binds to the 23S rRNA. In Microcystis aeruginosa (strain NIES-843 / IAM M-2473), this protein is Large ribosomal subunit protein uL15.